The primary structure comprises 69 residues: MDILEETAAPLKDFAKNSIRLFKKCTKPDAQEFQKIALATLIGFAIMGFIGFFVKLIHIPINNILVGGV.

Residues 1–40 are Cytoplasmic-facing; sequence MDILEETAAPLKDFAKNSIRLFKKCTKPDAQEFQKIALAT. The helical transmembrane segment at 41–61 threads the bilayer; it reads LIGFAIMGFIGFFVKLIHIPI. At 62–69 the chain is on the extracellular side; sequence NNILVGGV.

Belongs to the SecE/SEC61-gamma family. As to quaternary structure, heterotrimeric complex composed of SEC61-alpha, SEC61-beta and SEC61-gamma.

It localises to the endoplasmic reticulum membrane. Necessary for protein translocation in the endoplasmic reticulum. The polypeptide is Protein transport protein Sec61 subunit gamma (sec61g) (Dictyostelium discoideum (Social amoeba)).